The chain runs to 350 residues: D-alanine--D-alanine ligase (350 aa).

Residues 134–337 (KIFAAQRGVK…LPKKHSIKVS (204 aa)) form the ATP-grasp domain. An ATP-binding site is contributed by 160 to 212 (IAYPIILKPARLGSSIGVSVINEEKELDYGRDLAFEYDDTIIAESFKSGVKEY). Residues Asp289, Glu301, and Asn303 each coordinate Mg(2+).

Belongs to the D-alanine--D-alanine ligase family. Mg(2+) is required as a cofactor. Mn(2+) serves as cofactor.

The protein localises to the cytoplasm. The catalysed reaction is 2 D-alanine + ATP = D-alanyl-D-alanine + ADP + phosphate + H(+). It participates in cell wall biogenesis; peptidoglycan biosynthesis. Its function is as follows. Cell wall formation. The sequence is that of D-alanine--D-alanine ligase from Helicobacter hepaticus (strain ATCC 51449 / 3B1).